The chain runs to 271 residues: tRNA (guanine-N(7)-)-methyltransferase (271 aa).

S-adenosyl-L-methionine contacts are provided by Glu-95, Glu-120, Asp-147, and Asp-175. The active site involves Asp-175. Substrate-binding positions include Lys-179, Asp-211, and 249–252; that span reads THFE.

The protein belongs to the class I-like SAM-binding methyltransferase superfamily. TrmB family.

It catalyses the reaction guanosine(46) in tRNA + S-adenosyl-L-methionine = N(7)-methylguanosine(46) in tRNA + S-adenosyl-L-homocysteine. The protein operates within tRNA modification; N(7)-methylguanine-tRNA biosynthesis. Functionally, catalyzes the formation of N(7)-methylguanine at position 46 (m7G46) in tRNA. The sequence is that of tRNA (guanine-N(7)-)-methyltransferase from Rhodopirellula baltica (strain DSM 10527 / NCIMB 13988 / SH1).